The following is a 510-amino-acid chain: Pantetheinase (510 aa).

A signal peptide spans 1–22 (MIMSQLLNYVAVLFFCVSRASS). The region spanning 31–307 (YEHAVILPNA…GKLLLAQLDS (277 aa)) is the CN hydrolase domain. N-linked (GlcNAc...) asparagine glycosylation is present at N39. The Proton acceptor role is filled by E80. N-linked (GlcNAc...) asparagine glycosylation is found at N87 and N147. K179 serves as the catalytic Proton donor. An N-linked (GlcNAc...) asparagine glycan is attached at N201. Residue C212 is the Nucleophile of the active site. N-linked (GlcNAc...) asparagine glycosylation is found at N316 and N354. D492 carries GPI-anchor amidated aspartate lipidation. The propeptide at 493-510 (LTTQALRLNPKTDAWKSK) is removed in mature form. Residue T504 is glycosylated (O-linked (GalNAc...) threonine).

This sequence belongs to the carbon-nitrogen hydrolase superfamily. BTD/VNN family. Monomer.

The protein resides in the cell membrane. The enzyme catalyses (R)-pantetheine + H2O = cysteamine + (R)-pantothenate. Its function is as follows. Amidohydrolase that hydrolyzes specifically one of the carboamide linkages in D-pantetheine thus recycling pantothenic acid (vitamin B5) and releasing cysteamine. The protein is Pantetheinase (VNN1) of Bos taurus (Bovine).